The sequence spans 197 residues: Auxin-responsive protein IAA19 (197 aa).

An EAR-like (transcriptional repression) motif is present at residues 13 to 17 (LRLGL). Residues 35-47 (MNMTSSGSNSDQC) show a composition bias toward polar residues. The segment at 35 to 67 (MNMTSSGSNSDQCESGVVSSGGDAEKVNDSPAA) is disordered. Positions 96-184 (LGYVKVSMDG…KRLRIMKRSD (89 aa)) constitute a PB1 domain.

It belongs to the Aux/IAA family. As to quaternary structure, homodimers and heterodimers. Interacts with the auxin response factor ARF7.

The protein resides in the nucleus. In terms of biological role, aux/IAA proteins are short-lived transcriptional factors that function as repressors of early auxin response genes at low auxin concentrations. Repression is thought to result from the interaction with auxin response factors (ARFs), proteins that bind to the auxin-responsive promoter element (AuxRE). Formation of heterodimers with ARF proteins may alter their ability to modulate early auxin response genes expression. The polypeptide is Auxin-responsive protein IAA19 (IAA19) (Arabidopsis thaliana (Mouse-ear cress)).